The following is a 123-amino-acid chain: Alpha-lactalbumin B/C (123 aa).

Positions 1–123 constitute a C-type lysozyme domain; the sequence is KQFTKCQLSQ…KLEQWLCEEL (123 aa). Cystine bridges form between Cys-6–Cys-120, Cys-28–Cys-111, Cys-61–Cys-77, and Cys-73–Cys-91. 5 residues coordinate Ca(2+): Lys-79, Asp-82, Asp-84, Asp-87, and Asp-88.

Belongs to the glycosyl hydrolase 22 family. As to quaternary structure, lactose synthase (LS) is a heterodimer of a catalytic component, beta1,4-galactosyltransferase (beta4Gal-T1) and a regulatory component, alpha-lactalbumin (LA). As to expression, mammary gland specific. Secreted in milk.

The protein resides in the secreted. Functionally, regulatory subunit of lactose synthase, changes the substrate specificity of galactosyltransferase in the mammary gland making glucose a good acceptor substrate for this enzyme. This enables LS to synthesize lactose, the major carbohydrate component of milk. In other tissues, galactosyltransferase transfers galactose onto the N-acetylglucosamine of the oligosaccharide chains in glycoproteins. The polypeptide is Alpha-lactalbumin B/C (Equus caballus (Horse)).